Here is a 584-residue protein sequence, read N- to C-terminus: MNNHIEALSYYLGAFVDELTRLNVCDVVISPGSRSTPIALLMEQHEGMNTYLHVDERSAGFFALGIAKAKKRPVALLCTSGTAAANYYPAVCEAFHSRVPLIVLTADRPHELRDVGAPQAMNQINLYGTFVKQFTEMALPEASEAMYHYARMTTQRMIASACLAPQGPVHLNFPVREPLIPDFSLESLWDKGRGEYTGVVQQGNAVMPSEYVDSLVGRLSHMEKGLIICGDDSHSEIATFATQLAEKTGYPILADPLSNIRSGHHDKTMVIDCYDTFLRNELLKETWKPDVLIRFGGMPVSKALTQFIKKQTKAVHIVVDESGQWRDPALVATEVVQASDIAFCSALIEKMPVMKKNDWFRMWQHINEKTKETLREMETYDTAFEGRVITDIVRVLPEGATLFASNSMPIRDTDSFFFTSDKNIQVMANRGVNGIDGIISTALGASMICDPLVLVIGDLSFYHDLNGLLAAKLHELNITIVVVNNDGGGIFSFLPQYEKKEHFESLFGTPIGLDYEHVVTMYGGSFSRVNGWEQFREEVQKGATTEGLHVVEICTNRDENLTLHRKLWAKTQDVITTSLQGESK.

The protein belongs to the TPP enzyme family. MenD subfamily. Homodimer. The cofactor is Mg(2+). Requires Mn(2+) as cofactor. Thiamine diphosphate is required as a cofactor.

It catalyses the reaction isochorismate + 2-oxoglutarate + H(+) = 5-enolpyruvoyl-6-hydroxy-2-succinyl-cyclohex-3-ene-1-carboxylate + CO2. It participates in quinol/quinone metabolism; 1,4-dihydroxy-2-naphthoate biosynthesis; 1,4-dihydroxy-2-naphthoate from chorismate: step 2/7. Its pathway is quinol/quinone metabolism; menaquinone biosynthesis. Catalyzes the thiamine diphosphate-dependent decarboxylation of 2-oxoglutarate and the subsequent addition of the resulting succinic semialdehyde-thiamine pyrophosphate anion to isochorismate to yield 2-succinyl-5-enolpyruvyl-6-hydroxy-3-cyclohexene-1-carboxylate (SEPHCHC). This is 2-succinyl-5-enolpyruvyl-6-hydroxy-3-cyclohexene-1-carboxylate synthase from Bacillus thuringiensis (strain Al Hakam).